A 185-amino-acid chain; its full sequence is Photosystem I assembly protein Ycf4 (185 aa).

Helical transmembrane passes span 20 to 40 (GNFFWACILFLGSLGFLAVGA) and 57 to 77 (ILFFPQGVVMSFYGIAGLFIS).

It belongs to the Ycf4 family.

Its subcellular location is the plastid. The protein resides in the chloroplast thylakoid membrane. Functionally, seems to be required for the assembly of the photosystem I complex. In Oryza nivara (Indian wild rice), this protein is Photosystem I assembly protein Ycf4.